The following is a 1163-amino-acid chain: E3 ubiquitin-protein ligase TRIM33 (1163 aa).

The tract at residues Met-1–Pro-119 is disordered. Residues Thr-27–Ser-38 are compositionally biased toward basic and acidic residues. Positions Thr-45–Ser-54 are enriched in low complexity. Residues Asp-72 to Thr-87 are compositionally biased toward pro residues. The segment covering Pro-88 to Ala-99 has biased composition (low complexity). The RING-type zinc finger occupies Cys-129–His-188. Residues Asn-215–Glu-268 form a B box-type 1; atypical zinc finger. Zn(2+) is bound by residues Cys-220, Cys-223, Cys-244, His-257, Cys-280, His-283, Cys-303, and His-308. Residues Gln-275–Leu-316 form a B box-type 2 zinc finger. Residues Ala-345–Ala-369 adopt a coiled-coil conformation. The segment covering Met-524–His-533 has biased composition (low complexity). Disordered stretches follow at residues Met-524–Gln-555, Gln-575–Gln-599, Leu-656–Pro-706, Thr-753–Ile-848, and Asn-867–Asp-918. Positions Gln-534–Gln-548 are enriched in basic residues. The segment covering Met-580–Pro-590 has biased composition (polar residues). 2 stretches are compositionally biased toward low complexity: residues Ser-678–Ala-691 and Thr-753–Thr-797. Positions Lys-821 to Arg-830 are enriched in basic and acidic residues. A compositionally biased stretch (polar residues) spans Ser-870 to Leu-889. The PHD-type zinc finger occupies Glu-921–Leu-968. The Bromo domain occupies Ala-991–Ile-1114. The interval Thr-1128–Pro-1147 is disordered. The span at Glu-1133–Ile-1144 shows a compositional bias: acidic residues.

The protein resides in the nucleus. It carries out the reaction S-ubiquitinyl-[E2 ubiquitin-conjugating enzyme]-L-cysteine + [acceptor protein]-L-lysine = [E2 ubiquitin-conjugating enzyme]-L-cysteine + N(6)-ubiquitinyl-[acceptor protein]-L-lysine.. It participates in protein modification; protein ubiquitination. May act as an E3 ubiquitin-protein ligase and a transcriptional repressor. Involved in the regulation of embryonic and adult hematopoiesis. Required for normal development and survival of both committed erythroid progenitor cells and posterior mesenchymal cells. The polypeptide is E3 ubiquitin-protein ligase TRIM33 (trim33) (Danio rerio (Zebrafish)).